Reading from the N-terminus, the 207-residue chain is dITP/XTP pyrophosphatase (207 aa).

7-12 (SNNAKK) is a binding site for substrate. Asp72 functions as the Proton acceptor in the catalytic mechanism. Position 72 (Asp72) interacts with Mg(2+). Substrate is bound by residues Ser73, 155-158 (FGYD), Lys183, and 188-189 (HR).

The protein belongs to the HAM1 NTPase family. As to quaternary structure, homodimer. It depends on Mg(2+) as a cofactor.

It carries out the reaction XTP + H2O = XMP + diphosphate + H(+). It catalyses the reaction dITP + H2O = dIMP + diphosphate + H(+). The enzyme catalyses ITP + H2O = IMP + diphosphate + H(+). Pyrophosphatase that catalyzes the hydrolysis of nucleoside triphosphates to their monophosphate derivatives, with a high preference for the non-canonical purine nucleotides XTP (xanthosine triphosphate), dITP (deoxyinosine triphosphate) and ITP. Seems to function as a house-cleaning enzyme that removes non-canonical purine nucleotides from the nucleotide pool, thus preventing their incorporation into DNA/RNA and avoiding chromosomal lesions. The sequence is that of dITP/XTP pyrophosphatase from Corynebacterium diphtheriae (strain ATCC 700971 / NCTC 13129 / Biotype gravis).